Reading from the N-terminus, the 615-residue chain is MSESERPEAGDGTDALGASPDTPLSSEDAAELEQLRREASVLREQLADAAGTIGSARSVRDVHQLEARIDSLAARNAKLMDTLKEARQQLLALREEVDRLGQPPSGYGVLLSVQDDETVDVFTSGRRMRLTCSPNIDTKGLKKGQTVRLNEALTVVEAGHFESVGEISTLREILADGHRALVVGHADEERIVWLAEPLVASADLPDGYDDDLGDDRPRKLRPGDSLLVDTKAGYAFERVPKAEVEDLVLEEVPDVSYNDIGGLGRQIEQIRDAVELPFLHKELYREYSLRPPKGVLLYGPPGCGKTLIAKAVANSLAKKMAEVRGDDAREAKSYFLNIKGPELLNKFVGETERHIRLIFQRAREKASEGTPVIVFFDEMDSIFRTRGTGVSSDVETTVVPQLLSEIDGVEGLENVIVIGASNREDMIDPAILRPGRLDVKIKIERPDAESAMDIFSKYLTDELPIHEDDLSEFSGDRSLTIKAMIEKVVDRMYAEIDDNRFLEVTYANGDKEVMYFKDFNSGAMIQNVVDRAKKNAIKAVLETGQRGLRIQHLLDSIVDEFAENEDLPNTTNPDDWARISGKKGERIVYIRTLVTGKSSSASRAIDTESNLGQYL.

The disordered stretch occupies residues 1 to 36 (MSESERPEAGDGTDALGASPDTPLSSEDAAELEQLR). A coiled-coil region spans residues 25–102 (SSEDAAELEQ…LREEVDRLGQ (78 aa)). 302-307 (GCGKTL) contacts ATP. Positions 614-615 (YL) are docks into pockets in the proteasome alpha-ring.

The protein belongs to the AAA ATPase family. In terms of assembly, homohexamer. Assembles into a hexameric ring structure that caps the 20S proteasome core. Strongly interacts with the prokaryotic ubiquitin-like protein Pup through a hydrophobic interface; the interacting region of ARC lies in its N-terminal coiled-coil domain. There is one Pup binding site per ARC hexamer ring. Upon ATP-binding, the C-terminus of ARC interacts with the alpha-rings of the proteasome core, possibly by binding to the intersubunit pockets.

It participates in protein degradation; proteasomal Pup-dependent pathway. Its function is as follows. ATPase which is responsible for recognizing, binding, unfolding and translocation of pupylated proteins into the bacterial 20S proteasome core particle. May be essential for opening the gate of the 20S proteasome via an interaction with its C-terminus, thereby allowing substrate entry and access to the site of proteolysis. Thus, the C-termini of the proteasomal ATPase may function like a 'key in a lock' to induce gate opening and therefore regulate proteolysis. This chain is Proteasome-associated ATPase, found in Mycolicibacterium gilvum (strain PYR-GCK) (Mycobacterium gilvum (strain PYR-GCK)).